The chain runs to 226 residues: UPF0758 protein SUB0843 (226 aa).

In terms of domain architecture, MPN spans 103 to 225 (QILSSYQVAK…YYSFREKSDI (123 aa)). Zn(2+)-binding residues include His174, His176, and Asp187. Residues 174-187 (HNHPSGLTNPSEND) carry the JAMM motif motif.

This sequence belongs to the UPF0758 family.

This is UPF0758 protein SUB0843 from Streptococcus uberis (strain ATCC BAA-854 / 0140J).